The following is a 251-amino-acid chain: ATP synthase subunit a (251 aa).

The next 5 membrane-spanning stretches (helical) occupy residues 14 to 34, 78 to 98, 107 to 127, 174 to 194, and 196 to 216; these read GFVK…LLAV, YLPF…FAVF, SLST…FYGI, MILA…MGVL, and LLIG…YIAA. Residues 224–251 are disordered; that stretch reads NAGASDDEGGEDAKSACAAGGKICKHKP.

The protein belongs to the ATPase A chain family. In terms of assembly, F-type ATPases have 2 components, CF(1) - the catalytic core - and CF(0) - the membrane proton channel. CF(1) has five subunits: alpha(3), beta(3), gamma(1), delta(1), epsilon(1). CF(0) has three main subunits: a(1), b(2) and c(9-12). The alpha and beta chains form an alternating ring which encloses part of the gamma chain. CF(1) is attached to CF(0) by a central stalk formed by the gamma and epsilon chains, while a peripheral stalk is formed by the delta and b chains.

It is found in the cell inner membrane. Its function is as follows. Key component of the proton channel; it plays a direct role in the translocation of protons across the membrane. In Nitrosospira multiformis (strain ATCC 25196 / NCIMB 11849 / C 71), this protein is ATP synthase subunit a.